The chain runs to 377 residues: Peptidyl-prolyl cis-trans isomerase D (377 aa).

In terms of domain architecture, PPIase cyclophilin-type spans 11-178 (YFDIQIGSQK…TDVTIVDCGE (168 aa)). TPR repeat units follow at residues 220–253 (ASEL…LNEF), 273–306 (FTLH…ADAA), and 314–347 (AKAY…APGD).

This sequence belongs to the cyclophilin-type PPIase family. PPIase D subfamily.

It localises to the cytoplasm. It carries out the reaction [protein]-peptidylproline (omega=180) = [protein]-peptidylproline (omega=0). In terms of biological role, PPIases accelerate the folding of proteins. It catalyzes the cis-trans isomerization of proline imidic peptide bonds in oligopeptides. The sequence is that of Peptidyl-prolyl cis-trans isomerase D (cpr6) from Aspergillus fumigatus (strain ATCC MYA-4609 / CBS 101355 / FGSC A1100 / Af293) (Neosartorya fumigata).